The chain runs to 590 residues: Arginine--tRNA ligase (590 aa).

Residues 138–148 (ANPTGPLHIGH) carry the 'HIGH' region motif.

Belongs to the class-I aminoacyl-tRNA synthetase family. In terms of assembly, monomer.

It is found in the cytoplasm. The enzyme catalyses tRNA(Arg) + L-arginine + ATP = L-arginyl-tRNA(Arg) + AMP + diphosphate. The polypeptide is Arginine--tRNA ligase (Orientia tsutsugamushi (strain Boryong) (Rickettsia tsutsugamushi)).